The sequence spans 155 residues: Ribosomal RNA large subunit methyltransferase H (155 aa).

S-adenosyl-L-methionine contacts are provided by residues leucine 72, glycine 103, and 122–127 (LSDLTL).

The protein belongs to the RNA methyltransferase RlmH family. Homodimer.

It is found in the cytoplasm. It catalyses the reaction pseudouridine(1915) in 23S rRNA + S-adenosyl-L-methionine = N(3)-methylpseudouridine(1915) in 23S rRNA + S-adenosyl-L-homocysteine + H(+). Functionally, specifically methylates the pseudouridine at position 1915 (m3Psi1915) in 23S rRNA. The polypeptide is Ribosomal RNA large subunit methyltransferase H (Delftia acidovorans (strain DSM 14801 / SPH-1)).